Reading from the N-terminus, the 714-residue chain is MGRRSAAPTSPFGEPRKFDPKFKGPIGKRHCTDVLCCIIFVVVILGYIALGVVAWIHGDPRKIIYPTDSYGQFCGQKGTPNENKTILMYFNILRCASPVVLINLQCPTTQLCVSKCPDRFATYLDMQANRFNNSYWEYYKQFCKPGFDKPRKSITEVLRDEDCPSMIIPSRPFLQRCFPDFSTRNGVLTVANKTEFKDGIGQMRNVTDLRSAANGINNVLDARSVGMKIFEDYASSWYWILIALFIAMVVSLLFLILLRFTAGVFFWIFIIGVIGVVGYGIWHCFWEYDSLKGVPGADLTIYDIGLQTDFRVYLQLRQTWLAFMILLCIVEVIIILMLIFLRNRIRIAIALLQEGSRAIGYIMSTLFYPIITFILIAICISYWAVTAVFMATSGEPIYKVMANKTLCKYADITCIPETFNTTNVTRLCPGAQCTFAFYGGESFYHQYILIFQLCNVFVFLWLVNFSIALGQCTLAGAFASYYWAFKKPADIPACPLFSSFGRAIRYHTGSLALGSLILALVQFIRIILEYLDHKLKASQNSFAKFILCCLKCCFWCLEKFIKFMNRNAYIMIAIYGKNFCTSAKDAFFLLMRNVIRVAVLDKVTDFLLFLGKVFVTGSVGVLAFFFFTRKIPVLTDEAPALNYYWVPLLTVLIGSYLIAHGFFSVYAMCVDTLFLCFCEDLERNNGSSSKPYYMSPNLHRILGKKEILSKKAKR.

At 1-33 (MGRRSAAPTSPFGEPRKFDPKFKGPIGKRHCTD) the chain is on the cytoplasmic side. The helical transmembrane segment at 34–54 (VLCCIIFVVVILGYIALGVVA) threads the bilayer. Residues 55–237 (WIHGDPRKII…KIFEDYASSW (183 aa)) lie on the Extracellular side of the membrane. N-linked (GlcNAc...) asparagine glycans are attached at residues asparagine 83, asparagine 132, asparagine 192, and asparagine 205. Residues 238 to 258 (YWILIALFIAMVVSLLFLILL) traverse the membrane as a helical segment. Topologically, residues 259 to 261 (RFT) are cytoplasmic. The chain crosses the membrane as a helical span at residues 262–282 (AGVFFWIFIIGVIGVVGYGIW). Residues 283-320 (HCFWEYDSLKGVPGADLTIYDIGLQTDFRVYLQLRQTW) lie on the Extracellular side of the membrane. A helical membrane pass occupies residues 321–341 (LAFMILLCIVEVIIILMLIFL). Residues 342-346 (RNRIR) are Cytoplasmic-facing. The helical transmembrane segment at 347-367 (IAIALLQEGSRAIGYIMSTLF) threads the bilayer. The Extracellular segment spans residues 368 to 369 (YP). The helical transmembrane segment at 370–390 (IITFILIAICISYWAVTAVFM) threads the bilayer. At 391 to 455 (ATSGEPIYKV…QYILIFQLCN (65 aa)) the chain is on the cytoplasmic side. Residues 456-476 (VFVFLWLVNFSIALGQCTLAG) form a helical membrane-spanning segment. Residues 477–510 (AFASYYWAFKKPADIPACPLFSSFGRAIRYHTGS) are Extracellular-facing. The helical transmembrane segment at 511-531 (LALGSLILALVQFIRIILEYL) threads the bilayer. The Cytoplasmic portion of the chain corresponds to 532–605 (DHKLKASQNS…RVAVLDKVTD (74 aa)). The chain crosses the membrane as a helical span at residues 606–626 (FLLFLGKVFVTGSVGVLAFFF). The Extracellular portion of the chain corresponds to 627–644 (FTRKIPVLTDEAPALNYY). The chain crosses the membrane as a helical span at residues 645–665 (WVPLLTVLIGSYLIAHGFFSV). The Cytoplasmic portion of the chain corresponds to 666–711 (YAMCVDTLFLCFCEDLERNNGSSSKPYYMSPNLHRILGKKEILSKK).

This sequence belongs to the CTL (choline transporter-like) family.

The protein resides in the cell membrane. It catalyses the reaction choline(out) + n H(+)(in) = choline(in) + n H(+)(out). In terms of biological role, choline/H+ antiporter. This Xenopus tropicalis (Western clawed frog) protein is Choline transporter-like protein 5 (slc44a5).